A 278-amino-acid chain; its full sequence is Rhomboid protease GlpG (278 aa).

The next 6 helical transmembrane spans lie at 95–115, 143–163, 170–190, 192–212, 224–241, and 245–267; these read GPLTLSVMVLCIAIYILMQIV, AFLHFSLLHILFNLMWWWYLA, LGTGKLLVLTIVSALFSGWGQ, LFSGVNFGGLSGVVYALMGYV, ISLPRGLMAFSVLWLVAG, and ILGLSIANAAHVSGLIIGLLMAF. The Nucleophile role is filled by serine 202. Histidine 255 is an active-site residue.

It belongs to the peptidase S54 family.

It localises to the cell inner membrane. It carries out the reaction Cleaves type-1 transmembrane domains using a catalytic dyad composed of serine and histidine that are contributed by different transmembrane domains.. In terms of biological role, rhomboid-type serine protease that catalyzes intramembrane proteolysis. The polypeptide is Rhomboid protease GlpG (Yersinia enterocolitica serotype O:8 / biotype 1B (strain NCTC 13174 / 8081)).